We begin with the raw amino-acid sequence, 622 residues long: V-type ATP synthase subunit I 1 (622 aa).

8 helical membrane-spanning segments follow: residues 306-326 (WVNL…YWEV), 328-348 (ISGF…ADAG), 373-393 (PAWC…ALVC), 428-448 (QMHV…LIVV), 459-479 (AEFG…NLIV), 485-505 (PLTG…FIFV), 532-552 (VFAD…GGAI), and 562-582 (PLFA…GHGL).

It belongs to the V-ATPase 116 kDa subunit family.

Its subcellular location is the cell membrane. Functionally, produces ATP from ADP in the presence of a proton gradient across the membrane. This chain is V-type ATP synthase subunit I 1 (atpI1), found in Treponema pallidum (strain Nichols).